Here is a 285-residue protein sequence, read N- to C-terminus: Acetylglutamate kinase (285 aa).

Substrate-binding positions include 64-65 (GG), Arg86, and Asn179.

This sequence belongs to the acetylglutamate kinase family. ArgB subfamily.

It localises to the plastid. Its subcellular location is the chloroplast. It carries out the reaction N-acetyl-L-glutamate + ATP = N-acetyl-L-glutamyl 5-phosphate + ADP. It functions in the pathway amino-acid biosynthesis; L-arginine biosynthesis; N(2)-acetyl-L-ornithine from L-glutamate: step 2/4. Functionally, catalyzes the ATP-dependent phosphorylation of N-acetyl-L-glutamate. This Pyropia yezoensis (Susabi-nori) protein is Acetylglutamate kinase.